Consider the following 191-residue polypeptide: UPF0312 protein PA0423 (191 aa).

The first 23 residues, 1 to 23 (MLKKTLAALALGSALFTAGQAMA), serve as a signal peptide directing secretion.

Belongs to the UPF0312 family. Type 1 subfamily.

Its subcellular location is the periplasm. The sequence is that of UPF0312 protein PA0423 from Pseudomonas aeruginosa (strain ATCC 15692 / DSM 22644 / CIP 104116 / JCM 14847 / LMG 12228 / 1C / PRS 101 / PAO1).